We begin with the raw amino-acid sequence, 486 residues long: CDT1-like protein b (486 aa).

Disordered regions lie at residues 273–294 (PEGG…PSRS) and 348–371 (VKDD…ASDD). A compositionally biased stretch (polar residues) spans 281–294 (LRSTNSLARGPSRS). Residues 348 to 363 (VKDDISNESGDEKSNY) show a composition bias toward basic and acidic residues.

It belongs to the Cdt1 family. As to expression, expressed in proliferating (e.g. shoot and root apical meristems, organ primordia, guard cells and stomatal lineage) and endoreplicating cells (e.g. developing trichomes).

The protein localises to the nucleus. Member of the pre-replication complex. Regulates endoreduplication. Involved in the coordination of cell and plastid division. This chain is CDT1-like protein b (CDT1B), found in Arabidopsis thaliana (Mouse-ear cress).